The chain runs to 360 residues: Chorismate synthase (360 aa).

Arginine 48 and arginine 54 together coordinate NADP(+). Residues arginine 125–serine 127, asparagine 246–alanine 247, glycine 286, lysine 301–serine 305, and arginine 327 each bind FMN.

It belongs to the chorismate synthase family. In terms of assembly, homotetramer. Requires FMNH2 as cofactor.

It carries out the reaction 5-O-(1-carboxyvinyl)-3-phosphoshikimate = chorismate + phosphate. It participates in metabolic intermediate biosynthesis; chorismate biosynthesis; chorismate from D-erythrose 4-phosphate and phosphoenolpyruvate: step 7/7. Functionally, catalyzes the anti-1,4-elimination of the C-3 phosphate and the C-6 proR hydrogen from 5-enolpyruvylshikimate-3-phosphate (EPSP) to yield chorismate, which is the branch point compound that serves as the starting substrate for the three terminal pathways of aromatic amino acid biosynthesis. This reaction introduces a second double bond into the aromatic ring system. In Glaesserella parasuis serovar 5 (strain SH0165) (Haemophilus parasuis), this protein is Chorismate synthase.